Reading from the N-terminus, the 1215-residue chain is DNA-directed RNA polymerase subunit beta' (1215 aa).

Zn(2+)-binding residues include Cys60, Cys62, Cys75, and Cys78. 3 residues coordinate Mg(2+): Asp449, Asp451, and Asp453. Residues Cys818, Cys892, Cys899, and Cys902 each coordinate Zn(2+).

Belongs to the RNA polymerase beta' chain family. In terms of assembly, the RNAP catalytic core consists of 2 alpha, 1 beta, 1 beta' and 1 omega subunit. When a sigma factor is associated with the core the holoenzyme is formed, which can initiate transcription. Mg(2+) is required as a cofactor. It depends on Zn(2+) as a cofactor.

It catalyses the reaction RNA(n) + a ribonucleoside 5'-triphosphate = RNA(n+1) + diphosphate. Its function is as follows. DNA-dependent RNA polymerase catalyzes the transcription of DNA into RNA using the four ribonucleoside triphosphates as substrates. The polypeptide is DNA-directed RNA polymerase subunit beta' (Limosilactobacillus fermentum (strain NBRC 3956 / LMG 18251) (Lactobacillus fermentum)).